Consider the following 638-residue polypeptide: MAALAGEEAWRCRGCGNYVPLSQRLYRTANEAWHSSCFRCSECQESLTNWYYEKDGKLYCHKDYWAKFGEFCHGCSLLMTGPAMVAGEFKYHPECFACMSCKVIIEDGDAYALVQHATLYCGKCHNEVVLAPMFERLSTESVQDQLPYSVTLISMPATTECRRGFSVSVESASSNYATTVQVKEVNRMHISPNNRNAIHPGDRILEINGTPVRTLRVEEVEDAINQTSQTLQLLIEHDPVPQRLDQLRLDTRLSPHMQSSGHTLMLSTLDAKENQEGTLRRRSLRRSNSISKSPGPSSPKEPLLLSRDISRSESLRCSSSYSQQIFRPCDLIHGEVLGKGFFGQAIKVTHKATGKVMVMKELIRCDEETQKTFLTEVKVMRSLDHPNVLKFIGVLYKDKKLNLLTEYIEGGTLKDFLRNVDPFPWQQKVRFAKGIASGMAYLHSMCIIHRDLNSHNCLIKLDKTVVVADFGLSRLIVEERKRPPVEKAATKKRTLRKSDRKKRYTVVGNPYWMAPEMLNGKSYDETVDVFSFGIVLCEIIGQVYADPDCLPRTLDFGLNVKLFWEKFVPTDCPPAFFPLAAICCKLEPESRPAFSKLEDSFEALSLFLGELAIPLPAELEELDHTVSMEYGLTRDSPP.

LIM zinc-binding domains lie at 12–63 (CRGC…CHKD) and 72–124 (CHGC…CGKC). Residues 152–239 (LISMPATTEC…TLQLLIEHDP (88 aa)) enclose the PDZ domain. The residue at position 210 (T210) is a Phosphothreonine. The segment covering 257-266 (MQSSGHTLML) has biased composition (polar residues). Residues 257-304 (MQSSGHTLMLSTLDAKENQEGTLRRRSLRRSNSISKSPGPSSPKEPLL) form a disordered region. A compositionally biased stretch (basic and acidic residues) spans 270 to 279 (DAKENQEGTL). Residues 286–304 (RSNSISKSPGPSSPKEPLL) show a composition bias toward low complexity. A phosphoserine mark is found at S293 and S298. The Protein kinase domain occupies 331–608 (LIHGEVLGKG…DSFEALSLFL (278 aa)). ATP-binding positions include 337-345 (LGKGFFGQA) and K360. D451 is a catalytic residue. Residue T505 is modified to Phosphothreonine; by ROCK1 and CDC42BP.

The protein belongs to the protein kinase superfamily. TKL Ser/Thr protein kinase family. As to quaternary structure, binds ROCK1 and MARF1. Interacts with NISCH. In terms of processing, phosphorylated on serine and/or threonine residues by ROCK1. As to expression, found in various tissues at moderate levels, except for testis, which shows very low expression.

It is found in the cytoplasm. It localises to the nucleus. Its subcellular location is the perinuclear region. The protein localises to the cytoskeleton. The protein resides in the spindle. It is found in the microtubule organizing center. It localises to the centrosome. It carries out the reaction L-seryl-[protein] + ATP = O-phospho-L-seryl-[protein] + ADP + H(+). It catalyses the reaction L-threonyl-[protein] + ATP = O-phospho-L-threonyl-[protein] + ADP + H(+). Its function is as follows. Serine/threonine-protein kinase that plays an essential role in the regulation of actin filament dynamics. Acts downstream of several Rho family GTPase signal transduction pathways. Involved in astral microtubule organization and mitotic spindle orientation during early stages of mitosis by mediating phosphorylation of TPPP. Displays serine/threonine-specific phosphorylation of myelin basic protein and histone (MBP) in vitro. Suppresses ciliogenesis via multiple pathways; phosphorylation of CFL1, directional trafficking of ciliary vesicles to the ciliary base, and by facilitating YAP1 nuclear localization where it acts as a transcriptional corepressor of the TEAD4 target genes AURKA and PLK1. This Rattus norvegicus (Rat) protein is LIM domain kinase 2 (Limk2).